The primary structure comprises 256 residues: uncharacterized protein (256 aa).

Residues 1–24 form the signal peptide; the sequence is MIKRVNKLVLGISLLFLVISIAAG. A lipid anchor (N-palmitoyl cysteine) is attached at Cys25. Cys25 is lipidated: S-diacylglycerol cysteine.

It belongs to the staphylococcal tandem lipoprotein family.

Its subcellular location is the cell membrane. This is an uncharacterized protein from Staphylococcus aureus.